A 300-amino-acid polypeptide reads, in one-letter code: tRNA dimethylallyltransferase (300 aa).

Glycine 11–serine 18 is a binding site for ATP. Threonine 13–serine 18 contributes to the substrate binding site. The interaction with substrate tRNA stretch occupies residues aspartate 35–glutamine 38.

It belongs to the IPP transferase family. Monomer. The cofactor is Mg(2+).

The catalysed reaction is adenosine(37) in tRNA + dimethylallyl diphosphate = N(6)-dimethylallyladenosine(37) in tRNA + diphosphate. Catalyzes the transfer of a dimethylallyl group onto the adenine at position 37 in tRNAs that read codons beginning with uridine, leading to the formation of N6-(dimethylallyl)adenosine (i(6)A). The polypeptide is tRNA dimethylallyltransferase (Borreliella afzelii (strain PKo) (Borrelia afzelii)).